Reading from the N-terminus, the 230-residue chain is Secretory carrier-associated membrane protein 4 (230 aa).

Over 1–39 the chain is Cytoplasmic; the sequence is MSGKENNFPPLPKFIPLKPCFYQNFSDEIPIEHQVLVKR. The next 4 membrane-spanning stretches (helical) occupy residues 40–60, 61–81, 105–125, and 149–169; these read IYRL…ACLA, WWIA…LLLF, FMAF…QAVG, and VVML…AVMI. At 170 to 230 the chain is on the cytoplasmic side; it reads MKVHSIYRGT…SYPASGGQWP (61 aa). A Phosphothreonine modification is found at threonine 194. Positions 208 to 230 are disordered; it reads FSGNSLPEYPTVPSYPASGGQWP.

This sequence belongs to the SCAMP family.

It localises to the membrane. Functionally, probably involved in membrane protein trafficking. This is Secretory carrier-associated membrane protein 4 (SCAMP4) from Bos taurus (Bovine).